A 470-amino-acid polypeptide reads, in one-letter code: Choline/ethanolamine transporter flvcr2a (470 aa).

At 1–23 (MCDKADNHIDVQPEGNLEVSSVS) the chain is on the cytoplasmic side. The chain crosses the membrane as a helical span at residues 24 to 48 (STRLYRRRWVILLLFSSYSLCNAFQ). Choline-binding residues include N45, A46, and W49. Residues 49–66 (WIQYGIINNIFMKFYQVS) lie on the Extracellular side of the membrane. A helical transmembrane segment spans residues 67 to 94 (SFAVDWLSMVYMLTYIPFIFPVTWLLER). Topologically, residues 95–96 (KG) are cytoplasmic. Residues 97 to 116 (LRVVALLAASINCAGTWIKV) form a helical membrane-spanning segment. Topologically, residues 117 to 123 (ASVQPSL) are extracellular. A helical membrane pass occupies residues 124-152 (FWVTMLGQFACSCAQVFILGMPSQVASVW). Choline is bound by residues Q138 and L142. Residues 153 to 157 (FGSDE) lie on the Cytoplasmic side of the membrane. A helical transmembrane segment spans residues 158-183 (VSTACAIGVFGNQLGIAIGFLVPPVL). Over 184 to 188 (VPNVE) the chain is Extracellular. A helical transmembrane segment spans residues 189-218 (DMGELAEHISIMFYITAAVATLIFLLVVFV). Residues 219-254 (FQEKPETPPSLAQVALRNMPTGQHSYLASIARLMCN) are Cytoplasmic-facing. The chain crosses the membrane as a helical span at residues 255–285 (KPFILLLISYGLNVGSFYAVSTLLNRMIIEH). Y272 provides a ligand contact to choline. Over 286-289 (YPGE) the chain is Extracellular. A helical transmembrane segment spans residues 290-318 (EVNAGRIGLTLVVAGVVGSLICGVWLDKT). At 319 to 320 (KT) the chain is on the cytoplasmic side. A helical transmembrane segment spans residues 321 to 343 (YKQTTLSVYLLSFVGMLIYSFTL). Over 344-346 (NLG) the chain is Extracellular. Residues 347–376 (HLWLVFLTSGVLGFFMTGYLPLGFEFAVEL) traverse the membrane as a helical segment. Topologically, residues 377 to 384 (TYPESEGT) are cytoplasmic. A helical membrane pass occupies residues 385–410 (SSGLLNCSAQVFGIAFTIIQGKIIDH). Residue Q394 participates in choline binding. At 411 to 412 (FG) the chain is on the extracellular side. The chain crosses the membrane as a helical span at residues 413 to 435 (TLAGNIFLCVFLLIGSIMTAFIK). Residues 436 to 470 (SDLRRQKANQETGGNADSSVHPQHGETLPVKEVKM) are Cytoplasmic-facing. A compositionally biased stretch (polar residues) spans 445 to 456 (QETGGNADSSVH). Residues 445–470 (QETGGNADSSVHPQHGETLPVKEVKM) form a disordered region.

The protein belongs to the major facilitator superfamily. Feline leukemia virus subgroup C receptor (TC 2.A.1.28.1) family.

The protein resides in the cell membrane. Its subcellular location is the mitochondrion membrane. The protein localises to the endoplasmic reticulum membrane. It catalyses the reaction choline(out) = choline(in). The enzyme catalyses ethanolamine(in) = ethanolamine(out). The catalysed reaction is heme b(in) = heme b(out). Choline uniporter that specifically mediates choline uptake at the blood-brain-barrier. Responsible for the majority of choline uptake across the blood-brain-barrier from the circulation into the brain. Choline, a nutrient critical for brain development, is a precursor of phosphatidylcholine, as well as betaine. Also mediates transport of ethanolamine. Choline and ethanolamine transport is not coupled with proton transport and is exclusively driven by the choline gradient across the plasma membrane. Also acts as a heme b transporter. The chain is Choline/ethanolamine transporter flvcr2a from Danio rerio (Zebrafish).